A 264-amino-acid chain; its full sequence is Thymidylate synthase (264 aa).

R21 serves as a coordination point for dUMP. Residue H51 coordinates (6R)-5,10-methylene-5,6,7,8-tetrahydrofolate. Residue 126–127 (RR) coordinates dUMP. The Nucleophile role is filled by C146. Residues 166 to 169 (RSAD), N177, and 207 to 209 (HLY) each bind dUMP. Residue D169 coordinates (6R)-5,10-methylene-5,6,7,8-tetrahydrofolate. Residue A263 coordinates (6R)-5,10-methylene-5,6,7,8-tetrahydrofolate.

Belongs to the thymidylate synthase family. Bacterial-type ThyA subfamily. As to quaternary structure, homodimer.

The protein localises to the cytoplasm. The catalysed reaction is dUMP + (6R)-5,10-methylene-5,6,7,8-tetrahydrofolate = 7,8-dihydrofolate + dTMP. It participates in pyrimidine metabolism; dTTP biosynthesis. Catalyzes the reductive methylation of 2'-deoxyuridine-5'-monophosphate (dUMP) to 2'-deoxythymidine-5'-monophosphate (dTMP) while utilizing 5,10-methylenetetrahydrofolate (mTHF) as the methyl donor and reductant in the reaction, yielding dihydrofolate (DHF) as a by-product. This enzymatic reaction provides an intracellular de novo source of dTMP, an essential precursor for DNA biosynthesis. The sequence is that of Thymidylate synthase from Nitrosomonas eutropha (strain DSM 101675 / C91 / Nm57).